A 185-amino-acid polypeptide reads, in one-letter code: Elongation factor P (185 aa).

The protein belongs to the elongation factor P family.

It localises to the cytoplasm. It participates in protein biosynthesis; polypeptide chain elongation. Functionally, involved in peptide bond synthesis. Stimulates efficient translation and peptide-bond synthesis on native or reconstituted 70S ribosomes in vitro. Probably functions indirectly by altering the affinity of the ribosome for aminoacyl-tRNA, thus increasing their reactivity as acceptors for peptidyl transferase. This Desulforudis audaxviator (strain MP104C) protein is Elongation factor P.